The sequence spans 176 residues: Probable DNA-directed RNA polymerase subunit delta (176 aa).

The 68-residue stretch at lysine 14–tryptophan 81 folds into the HTH HARE-type domain. Residues leucine 114–alanine 176 are disordered. Composition is skewed to acidic residues over residues glutamate 116–glutamate 145 and valine 153–alanine 176.

This sequence belongs to the RpoE family. In terms of assembly, RNAP is composed of a core of 2 alpha, a beta and a beta' subunits. The core is associated with a delta subunit and one of several sigma factors.

Participates in both the initiation and recycling phases of transcription. In the presence of the delta subunit, RNAP displays an increased specificity of transcription, a decreased affinity for nucleic acids, and an increased efficiency of RNA synthesis because of enhanced recycling. The sequence is that of Probable DNA-directed RNA polymerase subunit delta from Staphylococcus aureus (strain bovine RF122 / ET3-1).